A 373-amino-acid chain; its full sequence is Cell division protein FtsZ 1 (373 aa).

GTP-binding positions include 51 to 55 (GAGCN), 138 to 140 (GTG), Glu169, Arg173, and Asp216. The interval 354–373 (EESYFGEEERRPIKLDLDEL) is disordered. Residues 360–373 (EEERRPIKLDLDEL) are compositionally biased toward basic and acidic residues.

Belongs to the FtsZ family. In terms of assembly, homodimer. Polymerizes to form a dynamic ring structure in a strictly GTP-dependent manner. Interacts directly with several other division proteins.

It localises to the cytoplasm. Functionally, essential cell division protein that forms a contractile ring structure (Z ring) at the future cell division site. The regulation of the ring assembly controls the timing and the location of cell division. One of the functions of the FtsZ ring is to recruit other cell division proteins to the septum to produce a new cell wall between the dividing cells. Binds GTP and shows GTPase activity. The sequence is that of Cell division protein FtsZ 1 from Thermococcus kodakarensis (strain ATCC BAA-918 / JCM 12380 / KOD1) (Pyrococcus kodakaraensis (strain KOD1)).